The following is a 704-amino-acid chain: Elongation factor G (704 aa).

Residues 8–291 (DKVRNIGIMA…AVVEYLASPV (284 aa)) enclose the tr-type G domain. Residues 17–24 (AHIDAGKT), 90–94 (DTPGH), and 144–147 (NKMD) contribute to the GTP site.

It belongs to the TRAFAC class translation factor GTPase superfamily. Classic translation factor GTPase family. EF-G/EF-2 subfamily.

The protein localises to the cytoplasm. Catalyzes the GTP-dependent ribosomal translocation step during translation elongation. During this step, the ribosome changes from the pre-translocational (PRE) to the post-translocational (POST) state as the newly formed A-site-bound peptidyl-tRNA and P-site-bound deacylated tRNA move to the P and E sites, respectively. Catalyzes the coordinated movement of the two tRNA molecules, the mRNA and conformational changes in the ribosome. The polypeptide is Elongation factor G (Chlorobium limicola (strain DSM 245 / NBRC 103803 / 6330)).